The primary structure comprises 153 residues: NADPH-dependent 7-cyano-7-deazaguanine reductase (153 aa).

C51 serves as the catalytic Thioimide intermediate. D58 (proton donor) is an active-site residue. Residues 73-75 (VES) and 92-93 (HE) contribute to the substrate site.

This sequence belongs to the GTP cyclohydrolase I family. QueF type 1 subfamily.

Its subcellular location is the cytoplasm. It catalyses the reaction 7-aminomethyl-7-carbaguanine + 2 NADP(+) = 7-cyano-7-deazaguanine + 2 NADPH + 3 H(+). Its pathway is tRNA modification; tRNA-queuosine biosynthesis. Catalyzes the NADPH-dependent reduction of 7-cyano-7-deazaguanine (preQ0) to 7-aminomethyl-7-deazaguanine (preQ1). This is NADPH-dependent 7-cyano-7-deazaguanine reductase from Granulibacter bethesdensis (strain ATCC BAA-1260 / CGDNIH1).